Reading from the N-terminus, the 371-residue chain is Alanine dehydrogenase (371 aa).

Positions 15 and 75 each coordinate substrate. The active-site Proton donor/acceptor is the His96. NAD(+) is bound by residues Ser134, 178-179 (TA), Asp198, Lys203, Ser220, 239-240 (VL), 267-270 (IAID), Arg279, and 298-301 (VANM). Asp270 acts as the Proton donor/acceptor in catalysis. Residues Glu323 and His327 each contribute to the Mg(2+) site.

This sequence belongs to the AlaDH/PNT family. As to quaternary structure, homohexamer. Trimer of dimers. Mg(2+) is required as a cofactor.

Its subcellular location is the secreted. It catalyses the reaction L-alanine + NAD(+) + H2O = pyruvate + NH4(+) + NADH + H(+). Its pathway is amino-acid degradation; L-alanine degradation via dehydrogenase pathway; NH(3) and pyruvate from L-alanine: step 1/1. With respect to regulation, inhibited by CuSO(4) and ZnCl(2). Functionally, catalyzes the reversible reductive amination of pyruvate to L-alanine. However, since the physiological environment of M.tuberculosis has a neutral pH, it can be assumed that the enzyme catalyzes exclusively the formation of L-alanine. May play a role in cell wall synthesis as L-alanine is an important constituent of the peptidoglycan layer. The polypeptide is Alanine dehydrogenase (ald) (Mycobacterium tuberculosis (strain ATCC 25618 / H37Rv)).